The following is a 336-amino-acid chain: 3-isopropylmalate dehydrogenase (336 aa).

Residues arginine 87, arginine 97, arginine 121, and aspartate 211 each contribute to the substrate site. Aspartate 211, aspartate 235, and aspartate 239 together coordinate Mg(2+). 271-283 (GSAPDIAGQGIAD) lines the NAD(+) pocket.

Belongs to the isocitrate and isopropylmalate dehydrogenases family. LeuB type 2 subfamily. Homodimer. It depends on Mg(2+) as a cofactor. Mn(2+) is required as a cofactor.

The protein localises to the cytoplasm. It carries out the reaction (2R,3S)-3-isopropylmalate + NAD(+) = 4-methyl-2-oxopentanoate + CO2 + NADH. Its pathway is amino-acid biosynthesis; L-leucine biosynthesis; L-leucine from 3-methyl-2-oxobutanoate: step 3/4. In terms of biological role, catalyzes the oxidation of 3-carboxy-2-hydroxy-4-methylpentanoate (3-isopropylmalate) to 3-carboxy-4-methyl-2-oxopentanoate. The product decarboxylates to 4-methyl-2 oxopentanoate. In Mycobacterium bovis (strain ATCC BAA-935 / AF2122/97), this protein is 3-isopropylmalate dehydrogenase.